A 159-amino-acid polypeptide reads, in one-letter code: Putative ribosomal RNA large subunit methyltransferase H (159 aa).

S-adenosyl-L-methionine contacts are provided by residues leucine 76, glycine 108, and 127 to 132 (FSKMTF).

The protein belongs to the RNA methyltransferase RlmH family.

It is found in the cytoplasm. The enzyme catalyses pseudouridine(1915) in 23S rRNA + S-adenosyl-L-methionine = N(3)-methylpseudouridine(1915) in 23S rRNA + S-adenosyl-L-homocysteine + H(+). Specifically methylates the pseudouridine at position 1915 (m3Psi1915) in 23S rRNA. The protein is Putative ribosomal RNA large subunit methyltransferase H of Methanococcus maripaludis (strain C7 / ATCC BAA-1331).